Here is a 733-residue protein sequence, read N- to C-terminus: DNA replication licensing factor Mcm5 (733 aa).

The MCM domain maps to 328–534 (IYERLSQSLA…RDITLAKHII (207 aa)). Position 368 (arginine 368) interacts with ADP. Residues 509–512 (SRFD) carry the Arginine finger motif.

This sequence belongs to the MCM family. Component of the Mcm2-7 complex. The complex forms a toroidal hexameric ring with the proposed subunit order Mcm2-Mcm6-Mcm4-Mcm7-Mcm3-Mcm5.

The protein localises to the nucleus. The protein resides in the cytoplasm. It is found in the cytosol. The catalysed reaction is ATP + H2O = ADP + phosphate + H(+). Its function is as follows. Acts as a component of the Mcm2-7 complex (Mcm complex) which is the putative replicative helicase essential for 'once per cell cycle' DNA replication initiation and elongation in eukaryotic cells. Core component of CDC45-MCM-GINS (CMG) helicase, the molecular machine that unwinds template DNA during replication, and around which the replisome is built. The active ATPase sites in the Mcm2-7 ring are formed through the interaction surfaces of two neighboring subunits such that a critical structure of a conserved arginine finger motif is provided in trans relative to the ATP-binding site of the Walker A box of the adjacent subunit. The six ATPase active sites, however, are likely to contribute differentially to the complex helicase activity. This is DNA replication licensing factor Mcm5 (Mcm5) from Drosophila melanogaster (Fruit fly).